A 495-amino-acid polypeptide reads, in one-letter code: Probable cytosol aminopeptidase (495 aa).

Lysine 267 and aspartate 272 together coordinate Mn(2+). Lysine 279 is a catalytic residue. Positions 290, 349, and 351 each coordinate Mn(2+). Arginine 353 is a catalytic residue.

It belongs to the peptidase M17 family. It depends on Mn(2+) as a cofactor.

The protein resides in the cytoplasm. It catalyses the reaction Release of an N-terminal amino acid, Xaa-|-Yaa-, in which Xaa is preferably Leu, but may be other amino acids including Pro although not Arg or Lys, and Yaa may be Pro. Amino acid amides and methyl esters are also readily hydrolyzed, but rates on arylamides are exceedingly low.. The catalysed reaction is Release of an N-terminal amino acid, preferentially leucine, but not glutamic or aspartic acids.. Its function is as follows. Presumably involved in the processing and regular turnover of intracellular proteins. Catalyzes the removal of unsubstituted N-terminal amino acids from various peptides. This is Probable cytosol aminopeptidase from Histophilus somni (strain 129Pt) (Haemophilus somnus).